The chain runs to 110 residues: Protein mistic (110 aa).

Residues 1-7 (MFCTFFE) lie on the Cytoplasmic side of the membrane. A helical transmembrane segment spans residues 8–22 (KHHRKWDILLEKSTG). Residues 23–31 (VMEAMKVTS) are Extracellular-facing. The chain crosses the membrane as a helical span at residues 32-55 (EEKEQLSTAIDRMNEGLDAFIQLY). Residues 56-66 (NESEIDEPLIQ) lie on the Cytoplasmic side of the membrane. The helical transmembrane segment at 67–81 (LDDDTAELMKQARDM) threads the bilayer. Residues 82 to 88 (YGQEKLN) are Extracellular-facing. The chain crosses the membrane as a helical span at residues 89 to 102 (EKLNTIIKQILSIS). At 103-110 (VSEEGEKE) the chain is on the cytoplasmic side.

Monomer.

The protein resides in the cell membrane. Its function is as follows. Chaperone that facilitates the production and integration of integral membrane proteins into the bacterial lipid bilayer. This chain is Protein mistic (mstX), found in Bacillus subtilis (strain 168).